A 172-amino-acid polypeptide reads, in one-letter code: Translation initiation factor IF-3 (172 aa).

Belongs to the IF-3 family. In terms of assembly, monomer.

The protein localises to the cytoplasm. Functionally, IF-3 binds to the 30S ribosomal subunit and shifts the equilibrium between 70S ribosomes and their 50S and 30S subunits in favor of the free subunits, thus enhancing the availability of 30S subunits on which protein synthesis initiation begins. The polypeptide is Translation initiation factor IF-3 (Haemophilus influenzae (strain ATCC 51907 / DSM 11121 / KW20 / Rd)).